Here is a 953-residue protein sequence, read N- to C-terminus: Isoleucine--tRNA ligase (953 aa).

Residues 57 to 67 carry the 'HIGH' region motif; it reads PYANGDIHIGH. Glu582 contacts L-isoleucyl-5'-AMP. Positions 623–627 match the 'KMSKS' region motif; it reads KMSKS. Lys626 provides a ligand contact to ATP. 4 residues coordinate Zn(2+): Cys916, Cys919, Cys936, and Cys939.

It belongs to the class-I aminoacyl-tRNA synthetase family. IleS type 1 subfamily. As to quaternary structure, monomer. Requires Zn(2+) as cofactor.

The protein localises to the cytoplasm. The catalysed reaction is tRNA(Ile) + L-isoleucine + ATP = L-isoleucyl-tRNA(Ile) + AMP + diphosphate. In terms of biological role, catalyzes the attachment of isoleucine to tRNA(Ile). As IleRS can inadvertently accommodate and process structurally similar amino acids such as valine, to avoid such errors it has two additional distinct tRNA(Ile)-dependent editing activities. One activity is designated as 'pretransfer' editing and involves the hydrolysis of activated Val-AMP. The other activity is designated 'posttransfer' editing and involves deacylation of mischarged Val-tRNA(Ile). The protein is Isoleucine--tRNA ligase of Bordetella parapertussis (strain 12822 / ATCC BAA-587 / NCTC 13253).